The following is a 310-amino-acid chain: tRNA-5-methyluridine(54) 2-sulfurtransferase (310 aa).

Positions 3, 6, 22, and 25 each coordinate Zn(2+). The ATP site is built by Ala-53 and Ile-79. Positions 128 and 131 each coordinate [4Fe-4S] cluster. Cys-128 and Cys-220 are joined by a disulfide. ATP-binding residues include Lys-135 and Gly-154. [4Fe-4S] cluster is bound at residue Cys-220. Residues Cys-272, Cys-275, Cys-284, and Cys-287 each coordinate Zn(2+).

This sequence belongs to the TtcA family. TtuA subfamily. In terms of assembly, homodimer. Requires [4Fe-4S] cluster as cofactor. Mg(2+) serves as cofactor.

It catalyses the reaction 5-methyluridine(54) in tRNA + hydrogen sulfide + ATP = 5-methyl-2-thiouridine(54) in tRNA + AMP + diphosphate. Its pathway is tRNA modification. Its function is as follows. Catalyzes the ATP-dependent 2-thiolation of 5-methyluridine residue at position 54 in the T loop of tRNAs, leading to 5-methyl-2-thiouridine (m(5)s(2)U or s(2)T). This modification allows thermal stabilization of tRNAs in thermophilic microorganisms, and is required for cell growth at high temperatures. Can use free sulfide as sulfur source in vitro, which may be also the sulfur source in vivo. The polypeptide is tRNA-5-methyluridine(54) 2-sulfurtransferase (Pyrococcus horikoshii (strain ATCC 700860 / DSM 12428 / JCM 9974 / NBRC 100139 / OT-3)).